We begin with the raw amino-acid sequence, 516 residues long: Lipid II flippase MurJ (516 aa).

11 helical membrane passes run Trp-93–Val-113, Ile-133–Thr-153, Leu-159–Ala-179, Ala-188–Leu-208, Val-233–Ile-253, Leu-275–Leu-295, Val-317–Thr-337, Leu-358–Phe-378, Ile-390–Ile-409, Phe-448–Ile-468, and Ile-483–Val-503.

It belongs to the MurJ/MviN family.

Its subcellular location is the cell inner membrane. It functions in the pathway cell wall biogenesis; peptidoglycan biosynthesis. Involved in peptidoglycan biosynthesis. Transports lipid-linked peptidoglycan precursors from the inner to the outer leaflet of the cytoplasmic membrane. The polypeptide is Lipid II flippase MurJ (Burkholderia cenocepacia (strain ATCC BAA-245 / DSM 16553 / LMG 16656 / NCTC 13227 / J2315 / CF5610) (Burkholderia cepacia (strain J2315))).